The primary structure comprises 139 residues: Large-conductance mechanosensitive channel (139 aa).

Helical transmembrane passes span 16–36 (VIDL…VKAL), 40–60 (IVMP…LAWV), and 79–99 (GAFI…FMLV).

Belongs to the MscL family. As to quaternary structure, homopentamer.

The protein localises to the cell inner membrane. Its function is as follows. Channel that opens in response to stretch forces in the membrane lipid bilayer. May participate in the regulation of osmotic pressure changes within the cell. This Phenylobacterium zucineum (strain HLK1) protein is Large-conductance mechanosensitive channel.